The sequence spans 481 residues: uncharacterized protein (481 aa).

Positions 1 to 28 are disordered; the sequence is MPQSNHYSHQSRSHNDRRRQQPDEKVQA. Residues 29 to 87 form the TRAM domain; the sequence is TVNIGQRFPLTIRRLGINGEGIGYYKHVITFVKGALPEEVVVAEVTAVHPRYLEAKIRS. S-adenosyl-L-methionine contacts are provided by Gln-313, Tyr-342, Asp-363, and Asp-411. Cys-438 (nucleophile) is an active-site residue.

This sequence belongs to the class I-like SAM-binding methyltransferase superfamily. RNA M5U methyltransferase family.

This is an uncharacterized protein from Lactiplantibacillus plantarum (strain ATCC BAA-793 / NCIMB 8826 / WCFS1) (Lactobacillus plantarum).